We begin with the raw amino-acid sequence, 498 residues long: MASAFRSSLKLRASARLPAVRTITTTPRLRAAEKPYFPNEPTAPKLATAIPGPKNKAASEQLNEVFDVRSLNMLADYTKSVGNYIADLDGNMLLDVYAQIASIPVGYNNPHLLKVAASPEMATSLINRPALGNFPSADWAHILKTGILKVAPKGLDQVFTAMAGSDANETAYKAAFMYYRQQQRGGPEKEFTEEEIQSSMLNQTPGSPQLSIMSFKAGFHGRLFGSLSTTRSKPIHKLDIPAFDWPQAPFPSLKYPLEEHAKENAEEEQRCLQEAERLIKEWHNPVAAIIVEPIQSEGGDNHASPAFFRGLREITKRNNVLFIVDEVQTGVGATGKFWAHDHWNLETPPDMVTFSKKAQTAGYYFGNPALRPNKPYRQFNTWMGDPSRALIFRGIIEEIERLFLVENTAATGDYLYSGLERLAKQYPEHLQNLRGKGQGTFIAWDTPKRDEFLVKGKGVGINIGGSGQNAVRLRPMLIFQKHHADILLESIEKIIKQL.

Residue 164–165 participates in pyridoxal 5'-phosphate binding; that stretch reads GS. Arg222 lines the substrate pocket. Position 356 is an N6-(pyridoxal phosphate)lysine (Lys356). Position 381 (Thr381) interacts with pyridoxal 5'-phosphate.

The protein belongs to the class-III pyridoxal-phosphate-dependent aminotransferase family. In terms of assembly, homodimer. The cofactor is pyridoxal 5'-phosphate.

It localises to the cytoplasm. It carries out the reaction 4-aminobutanoate + 2-oxoglutarate = succinate semialdehyde + L-glutamate. Deaminates gamma-aminobutyric acid (GABA) to succinate-semialdehyde, which in turn is converted to succinate by the succinate semialdehyde dehydrogenase. Required for the degradation of GABA, which is important for utilization of GABA as nitrogen source. The chain is 4-aminobutyrate aminotransferase (gatA) from Emericella nidulans (strain FGSC A4 / ATCC 38163 / CBS 112.46 / NRRL 194 / M139) (Aspergillus nidulans).